The primary structure comprises 963 residues: MDAPKAGYAFEYLIETLNDSSHKKFFDVSKLGTKYDVLPYSIRVLLEAAVRNCDGFLMKKEDVMNILDWKTKQSNVEVPFFPARVLLQDFTGIPAMVDFAAMREAVKTLGGDPEKVHPACPTDLTVDHSLQIDFSKCAIQNAPNPGGGDLQKAGKLSPLKVQPKKLPCRGQTTCRGSCDSGELGRNSGTFSSQIENTPILCPFHLQPVPEPETVLKNQEVEFGRNRERLQFFKWSSRVFKNVAVIPPGTGMAHQINLEYLSRVVFEEKDLLFPDSVVGTDSHITMVNGLGILGWGVGGIETEAVMLGLPVSLTLPEVVGCELTGSSNPFVTSIDVVLGITKHLRQVGVAGKFVEFFGSGVSQLSIVDRTTIANMCPEYGAILSFFPVDNVTLKHLEHTGFSKAKLESMETYLKAVKLFRNDQNSSGEPEYSQVIQINLNSIVPSVSGPKRPQDRVAVTDMKSDFQACLNEKVGFKGFQIAAEKQKDIVSIHYEGSEYKLSHGSVVIAAVISCTNNCNPSVMLAAGLLAKKAVEAGLRVKPYIRTSLSPGSGMVTHYLSSSGVLPYLSKLGFEIVGYGCSICVGNTAPLSDAVLNAVKQGDLVTCGILSGNKNFEGRLCDCVRANYLASPPLVVAYAIAGTVNIDFQTEPLGTDPTGKNIYLHDIWPSREEVHRVEEEHVILSMFKALKDKIEMGNKRWNSLEAPDSVLFPWDLKSTYIRCPSFFDKLTKEPIALQAIENAHVLLYLGDSVTTDHISPAGSIARNSAAAKYLTNRGLTPREFNSYGARRGNDAVMTRGTFANIKLFNKFIGKPAPKTIHFPSGQTLDVFEAAELYQKEGIPLIILAGKKYGSGNSRDWAAKGPYLLGVKAVLAESYEKIHKDHLIGIGIAPLQFLPGENADSLGLSGRETFSLTFPEELSPGITLNIQTSTGKVFSVIASFEDDVEITLYKHGGLLNFVARKFS.

Positions 512, 578, and 581 each coordinate [4Fe-4S] cluster.

Belongs to the aconitase/IPM isomerase family. Interacts with RBCK1 isoform 1 and isoform 2 only in iron-rich conditions. Interacts (when associated with the 4Fe-4S) with FBXL5. Interacts with CIAO1 and CIAO2A. [4Fe-4S] cluster serves as cofactor. Ubiquitinated and degraded by the proteasome in presence of high level of iron and oxygen. Ubiquitinated by a SCF complex containing FBXL5. Upon iron and oxygen depletion FBXL5 is degraded, preventing ubiquitination and allowing its RNA-binding activity.

Its subcellular location is the cytoplasm. In terms of biological role, RNA-binding protein that binds to iron-responsive elements (IRES), which are stem-loop structures found in the 5'-UTR of ferritin, and delta aminolevulinic acid synthase mRNAs, and in the 3'-UTR of transferrin receptor mRNA. Binding to the IRE element in ferritin results in the repression of its mRNA translation. Binding of the protein to the transferrin receptor mRNA inhibits the degradation of this otherwise rapidly degraded mRNA. The polypeptide is Iron-responsive element-binding protein 2 (IREB2) (Homo sapiens (Human)).